Consider the following 134-residue polypeptide: Transcription antitermination protein NusB (134 aa).

The protein belongs to the NusB family.

Functionally, involved in transcription antitermination. Required for transcription of ribosomal RNA (rRNA) genes. Binds specifically to the boxA antiterminator sequence of the ribosomal RNA (rrn) operons. The sequence is that of Transcription antitermination protein NusB from Shewanella oneidensis (strain ATCC 700550 / JCM 31522 / CIP 106686 / LMG 19005 / NCIMB 14063 / MR-1).